Here is a 432-residue protein sequence, read N- to C-terminus: Probable pectate lyase 22 (432 aa).

Residues 1-45 form the signal peptide; the sequence is MFRPNSLLIPSNLSTTKSQRNTMLNSSYLSFALIFFCCILFSALA. A glycan (N-linked (GlcNAc...) asparagine) is linked at N65. Positions 228, 252, and 256 each coordinate Ca(2+). R308 is an active-site residue.

It belongs to the polysaccharide lyase 1 family. Ca(2+) serves as cofactor.

It catalyses the reaction Eliminative cleavage of (1-&gt;4)-alpha-D-galacturonan to give oligosaccharides with 4-deoxy-alpha-D-galact-4-enuronosyl groups at their non-reducing ends.. It functions in the pathway glycan metabolism; pectin degradation; 2-dehydro-3-deoxy-D-gluconate from pectin: step 2/5. The sequence is that of Probable pectate lyase 22 from Arabidopsis thaliana (Mouse-ear cress).